Reading from the N-terminus, the 317-residue chain is NAC domain-containing protein 19 (317 aa).

Residues 14-162 (LPPGFRFYPT…DWVLCRIYKK (149 aa)) form the NAC domain.

In terms of assembly, dimer. Interacts with RHA2A, RHA2B or RHG1A, but not with RHA3A or RHA3B. Expressed in stems, flowers, cauline leaves and rosettes.

Its subcellular location is the nucleus. In terms of biological role, transcription factors that bind specifically to the 5'-CATGTG-3' motif. This is NAC domain-containing protein 19 (NAC019) from Arabidopsis thaliana (Mouse-ear cress).